Here is a 184-residue protein sequence, read N- to C-terminus: GTP cyclohydrolase 1 (184 aa).

Residues C75, H78, and C146 each coordinate Zn(2+).

Belongs to the GTP cyclohydrolase I family. Homomer.

It catalyses the reaction GTP + H2O = 7,8-dihydroneopterin 3'-triphosphate + formate + H(+). The protein operates within cofactor biosynthesis; 7,8-dihydroneopterin triphosphate biosynthesis; 7,8-dihydroneopterin triphosphate from GTP: step 1/1. This Streptococcus pneumoniae (strain ATCC 700669 / Spain 23F-1) protein is GTP cyclohydrolase 1.